The chain runs to 299 residues: Delta-9 desaturase-like 3 protein (299 aa).

A run of 2 helical transmembrane segments spans residues 38 to 57 and 58 to 76; these read AVGA…TWEA and FRFA…TFSY. The Histidine box-1 signature appears at 77–82; the sequence is HRNLTH. Positions 114-118 match the Histidine box-2 motif; it reads HRFHH. A run of 2 helical transmembrane segments spans residues 174–194 and 198–218; these read IGLH…LPYL and VGVG…ACHI. Positions 246 to 250 match the Histidine box-3 motif; it reads HNNHH. Residues 262–282 traverse the membrane as a helical segment; the sequence is WYQVDLTWYLIWFFQVLGLAT.

It belongs to the fatty acid desaturase type 1 family. The cofactor is Fe cation.

Its subcellular location is the endoplasmic reticulum membrane. It participates in lipid metabolism; polyunsaturated fatty acid biosynthesis. The polypeptide is Delta-9 desaturase-like 3 protein (Arabidopsis thaliana (Mouse-ear cress)).